The sequence spans 585 residues: Arginine--tRNA ligase (585 aa).

The short motif at 131 to 141 (ANPTGPMHVGH) is the 'HIGH' region element.

It belongs to the class-I aminoacyl-tRNA synthetase family. Monomer.

Its subcellular location is the cytoplasm. It carries out the reaction tRNA(Arg) + L-arginine + ATP = L-arginyl-tRNA(Arg) + AMP + diphosphate. This chain is Arginine--tRNA ligase, found in Bartonella bacilliformis (strain ATCC 35685 / KC583 / Herrer 020/F12,63).